We begin with the raw amino-acid sequence, 304 residues long: UDP-N-acetylenolpyruvoylglucosamine reductase (304 aa).

Positions 33 to 213 (IGGPADIMVI…LEITRDLTER (181 aa)) constitute an FAD-binding PCMH-type domain. Arg177 is a catalytic residue. Ser227 functions as the Proton donor in the catalytic mechanism. Residue Glu297 is part of the active site.

It belongs to the MurB family. FAD is required as a cofactor.

The protein resides in the cytoplasm. It catalyses the reaction UDP-N-acetyl-alpha-D-muramate + NADP(+) = UDP-N-acetyl-3-O-(1-carboxyvinyl)-alpha-D-glucosamine + NADPH + H(+). Its pathway is cell wall biogenesis; peptidoglycan biosynthesis. Functionally, cell wall formation. In Alkaliphilus oremlandii (strain OhILAs) (Clostridium oremlandii (strain OhILAs)), this protein is UDP-N-acetylenolpyruvoylglucosamine reductase.